Consider the following 813-residue polypeptide: Lon protease (813 aa).

The 196-residue stretch at 30-225 (LPILPVRNIV…WLLQLMDKDI (196 aa)) folds into the Lon N-terminal domain. 376–383 (GPPGVGKT) lines the ATP pocket. Residues 612–793 (DDLAGIVTGL…DEVLAIALLK (182 aa)) form the Lon proteolytic domain. Active-site residues include Ser699 and Lys742.

It belongs to the peptidase S16 family. As to quaternary structure, homohexamer. Organized in a ring with a central cavity.

The protein resides in the cytoplasm. The enzyme catalyses Hydrolysis of proteins in presence of ATP.. In terms of biological role, ATP-dependent serine protease that mediates the selective degradation of mutant and abnormal proteins as well as certain short-lived regulatory proteins. Required for cellular homeostasis and for survival from DNA damage and developmental changes induced by stress. Degrades polypeptides processively to yield small peptide fragments that are 5 to 10 amino acids long. Binds to DNA in a double-stranded, site-specific manner. The chain is Lon protease from Cytophaga hutchinsonii (strain ATCC 33406 / DSM 1761 / CIP 103989 / NBRC 15051 / NCIMB 9469 / D465).